We begin with the raw amino-acid sequence, 518 residues long: Putative cytochrome P450 CYP13A6 (518 aa).

C463 is a binding site for heme.

This sequence belongs to the cytochrome P450 family. Requires heme as cofactor.

Its function is as follows. Cytochromes P450 are a group of heme-thiolate monooxygenases. They oxidize a variety of structurally unrelated compounds, including steroids, fatty acids, and xenobiotics. The chain is Putative cytochrome P450 CYP13A6 (cyp-13A6) from Caenorhabditis elegans.